The sequence spans 360 residues: Phosphoserine aminotransferase (360 aa).

Arginine 42 contacts L-glutamate. Residues 76–77, tryptophan 102, threonine 152, aspartate 172, and glutamine 195 contribute to the pyridoxal 5'-phosphate site; that span reads AS. N6-(pyridoxal phosphate)lysine is present on lysine 196. 237–238 provides a ligand contact to pyridoxal 5'-phosphate; the sequence is NT.

It belongs to the class-V pyridoxal-phosphate-dependent aminotransferase family. SerC subfamily. As to quaternary structure, homodimer. Requires pyridoxal 5'-phosphate as cofactor.

The protein resides in the cytoplasm. It catalyses the reaction O-phospho-L-serine + 2-oxoglutarate = 3-phosphooxypyruvate + L-glutamate. The catalysed reaction is 4-(phosphooxy)-L-threonine + 2-oxoglutarate = (R)-3-hydroxy-2-oxo-4-phosphooxybutanoate + L-glutamate. The protein operates within amino-acid biosynthesis; L-serine biosynthesis; L-serine from 3-phospho-D-glycerate: step 2/3. In terms of biological role, catalyzes the reversible conversion of 3-phosphohydroxypyruvate to phosphoserine and of 3-hydroxy-2-oxo-4-phosphonooxybutanoate to phosphohydroxythreonine. The polypeptide is Phosphoserine aminotransferase (Bacillus cereus (strain ZK / E33L)).